A 546-amino-acid chain; its full sequence is CTP synthase (546 aa).

The tract at residues 1-269 (MRSKKTKFIF…DERLAEVLNI (269 aa)) is amidoligase domain. Serine 17 is a binding site for CTP. Serine 17 serves as a coordination point for UTP. Residues 18 to 23 (SLGKGL) and aspartate 75 contribute to the ATP site. Mg(2+) contacts are provided by aspartate 75 and glutamate 143. CTP-binding positions include 150–152 (DIE), 190–195 (KTKPTQ), and lysine 226. Residues 190-195 (KTKPTQ) and lysine 226 each bind UTP. The region spanning 295–537 (RIAIVGKYVN…IRAALAQRDA (243 aa)) is the Glutamine amidotransferase type-1 domain. L-glutamine is bound at residue glycine 357. Cysteine 384 (nucleophile; for glutamine hydrolysis) is an active-site residue. L-glutamine is bound by residues 385-388 (LGLQ), glutamate 408, and arginine 465. Catalysis depends on residues histidine 510 and glutamate 512.

The protein belongs to the CTP synthase family. Homotetramer.

The enzyme catalyses UTP + L-glutamine + ATP + H2O = CTP + L-glutamate + ADP + phosphate + 2 H(+). It catalyses the reaction L-glutamine + H2O = L-glutamate + NH4(+). It carries out the reaction UTP + NH4(+) + ATP = CTP + ADP + phosphate + 2 H(+). It functions in the pathway pyrimidine metabolism; CTP biosynthesis via de novo pathway; CTP from UDP: step 2/2. With respect to regulation, allosterically activated by GTP, when glutamine is the substrate; GTP has no effect on the reaction when ammonia is the substrate. The allosteric effector GTP functions by stabilizing the protein conformation that binds the tetrahedral intermediate(s) formed during glutamine hydrolysis. Inhibited by the product CTP, via allosteric rather than competitive inhibition. In terms of biological role, catalyzes the ATP-dependent amination of UTP to CTP with either L-glutamine or ammonia as the source of nitrogen. Regulates intracellular CTP levels through interactions with the four ribonucleotide triphosphates. The sequence is that of CTP synthase from Myxococcus xanthus (strain DK1622).